We begin with the raw amino-acid sequence, 429 residues long: Keratin, type I cytoskeletal 47 kDa (429 aa).

Positions 1-16 (MTSYRSSSASYYSGSS) are enriched in low complexity. Residues 1 to 20 (MTSYRSSSASYYSGSSSKGG) form a disordered region. The interval 1 to 69 (MTSYRSSSAS…EAASSSFGGN (69 aa)) is head. A coil 1A region spans residues 70–105 (EKHAMQNLNDRLASYLEKVRALEATNSDLEGKIRNW). The 316-residue stretch at 70-385 (EKHAMQNLND…RLLEGELGQV (316 aa)) folds into the IF rod domain. The interval 106 to 127 (YDKQSDAGIGAGSKDYSKYFEI) is linker 1. A coil 1B region spans residues 128–219 (IAELRNKIRA…KNHEEEMSHA (92 aa)). A linker 12 region spans residues 220–242 (KSQSAGKVSVEMDAALGVDLTSI). The coil 2 stretch occupies residues 243 to 381 (LNNMRADYEI…QTYRRLLEGE (139 aa)). Residues 382-429 (LGQVTTVANTSSVESKTESSSTSTTRTRMVKTIVEEVVDGKVVSSRVE) form a tail region. The disordered stretch occupies residues 389–408 (ANTSSVESKTESSSTSTTRT). Positions 391–408 (TSSVESKTESSSTSTTRT) are enriched in low complexity.

It belongs to the intermediate filament family. As to quaternary structure, heterotetramer of two type I and two type II keratins.

The chain is Keratin, type I cytoskeletal 47 kDa (xk81a1) from Xenopus laevis (African clawed frog).